Consider the following 127-residue polypeptide: Small ribosomal subunit protein uS11 (127 aa).

The protein belongs to the universal ribosomal protein uS11 family. In terms of assembly, part of the 30S ribosomal subunit. Interacts with proteins S7 and S18. Binds to IF-3.

Located on the platform of the 30S subunit, it bridges several disparate RNA helices of the 16S rRNA. Forms part of the Shine-Dalgarno cleft in the 70S ribosome. This is Small ribosomal subunit protein uS11 from Streptococcus thermophilus (strain CNRZ 1066).